Reading from the N-terminus, the 509-residue chain is MPSGFQQIGSEDGEPPRQRVTGTLVLAVFSAVLGSLQFGYNIGVINAPQKVIEQSYNETWLGRQGPEGPGSIPPGTLTTLWALSVAIFSVGGMISSFLIGIISQWLGRKRAMLFNNALAVLGGTLMGLAKAAASYEMLILGRFFIGAYSGLTSGLVPMYVGEIAPTHLRGALGTLNQLAIVTGILIAQVLGLESMLGTATLWPLLLGITVLPALLQMVLLPLCPESPRYLYIIRNLEGPARKSLKRLTGWADVSEVLAELKEEKRKLERERPLSLLQLLGSHTHRQPLVIAIVLQLSQQLSGINAVFYYSTSIFESAGVEKPAYATIGAGVVNTVFTLVSVFLVERAGRRTLHLLGLAGMCGCAILMTVALLLLERVPAMSYVSIVAIFGFVAFFEIGPGPIPWFIVAELFSQGPRPAAMAVAGFSNWTCNFIIGMGFQYVADAMGPYVFLLFAVLLLGFFIFTFLKVPETRGRTFDQISAVFHRTPSLLEQEVKPSTELEYLGPDEHD.

Topologically, residues 1–24 (MPSGFQQIGSEDGEPPRQRVTGTL) are cytoplasmic. The interaction with SRFBP1 stretch occupies residues 7–13 (QIGSEDG). Residue Ser10 is modified to Phosphoserine. The chain crosses the membrane as a helical span at residues 25–45 (VLAVFSAVLGSLQFGYNIGVI). The Extracellular portion of the chain corresponds to 46–81 (NAPQKVIEQSYNETWLGRQGPEGPGSIPPGTLTTLW). Residue Asn57 is glycosylated (N-linked (GlcNAc...) asparagine). Residues 82–102 (ALSVAIFSVGGMISSFLIGII) form a helical membrane-spanning segment. The Cytoplasmic segment spans residues 103–111 (SQWLGRKRA). Residues 112 to 132 (MLFNNALAVLGGTLMGLAKAA) traverse the membrane as a helical segment. Topologically, residues 133-142 (ASYEMLILGR) are extracellular. The chain crosses the membrane as a helical span at residues 143–163 (FFIGAYSGLTSGLVPMYVGEI). Residues 164–171 (APTHLRGA) lie on the Cytoplasmic side of the membrane. The helical transmembrane segment at 172–192 (LGTLNQLAIVTGILIAQVLGL) threads the bilayer. A D-glucose-binding site is contributed by Gln177. Over 193 to 200 (ESMLGTAT) the chain is Extracellular. A helical transmembrane segment spans residues 201 to 221 (LWPLLLGITVLPALLQMVLLP). Topologically, residues 222–287 (LCPESPRYLY…LLGSHTHRQP (66 aa)) are cytoplasmic. The S-palmitoyl cysteine moiety is linked to residue Cys223. At Ser274 the chain carries Phosphoserine; by SGK1. A helical membrane pass occupies residues 288–308 (LVIAIVLQLSQQLSGINAVFY). D-glucose contacts are provided by residues 298 to 299 (QQ) and Asn304. Over 309-323 (YSTSIFESAGVEKPA) the chain is Extracellular. A helical transmembrane segment spans residues 324-344 (YATIGAGVVNTVFTLVSVFLV). Asn333 provides a ligand contact to D-glucose. Residues 345–353 (ERAGRRTLH) are Cytoplasmic-facing. The chain crosses the membrane as a helical span at residues 354–374 (LLGLAGMCGCAILMTVALLLL). Residues 375–384 (ERVPAMSYVS) lie on the Extracellular side of the membrane. Residues 385 to 405 (IVAIFGFVAFFEIGPGPIPWF) form a helical membrane-spanning segment. 2 residues coordinate D-glucose: Glu396 and Trp404. Residues 406-417 (IVAELFSQGPRP) are Cytoplasmic-facing. The chain crosses the membrane as a helical span at residues 418–438 (AAMAVAGFSNWTCNFIIGMGF). At 439–445 (QYVADAM) the chain is on the extracellular side. A helical transmembrane segment spans residues 446-466 (GPYVFLLFAVLLLGFFIFTFL). At 467–509 (KVPETRGRTFDQISAVFHRTPSLLEQEVKPSTELEYLGPDEHD) the chain is on the cytoplasmic side. Thr486 carries the phosphothreonine modification. Ser488 is modified (phosphoserine). Positions 489–490 (LL) match the Dileucine internalization motif motif.

Belongs to the major facilitator superfamily. Sugar transporter (TC 2.A.1.1) family. Glucose transporter subfamily. In terms of assembly, binds to DAXX. Interacts via its N-terminus with SRFBP1. Interacts with NDUFA9. Interacts with TRARG1; the interaction is required for proper SLC2A4 recycling after insulin stimulation. In terms of processing, sumoylated. Palmitoylated. Palmitoylation by ZDHHC7 controls the insulin-dependent translocation of GLUT4 to the plasma membrane.

It localises to the cell membrane. It is found in the endomembrane system. Its subcellular location is the cytoplasm. The protein resides in the perinuclear region. It carries out the reaction D-glucose(out) = D-glucose(in). Insulin-regulated facilitative glucose transporter, which plays a key role in removal of glucose from circulation. Response to insulin is regulated by its intracellular localization: in the absence of insulin, it is efficiently retained intracellularly within storage compartments in muscle and fat cells. Upon insulin stimulation, translocates from these compartments to the cell surface where it transports glucose from the extracellular milieu into the cell. In Bos taurus (Bovine), this protein is Solute carrier family 2, facilitated glucose transporter member 4.